A 175-amino-acid polypeptide reads, in one-letter code: MSSVAKSTANKLDWTKIVSKLGLSGQTAAALTSFKKRNDEAKRILFELKQQPSNVDFAFYKSTLKNTAIVDKIQSDVSKFTPSKANLSKQLNLIESFEAKALENAKETESVVLAELTDLEKTLENIESARPFDQLTVDDVVKARPDVEEKVQDMVSKGRFEVPGYKEKFGDLVIM.

N-acetylserine is present on Ser-2.

As to quaternary structure, F-type ATP synthases have 2 components, the catalytic core F(1) and the membrane-embedded component F(0), linked together by a central stalk and a peripheral stalk. The central stalk, also called rotor shaft, is often seen as part of F(1). The peripheral stalk is seen as part of F(0). F(0) contains the membrane channel next to the rotor. F-type ATP synthases form dimers but each monomer functions independently in ATP generation. The dimer consists of 18 different polypeptides: ATP1 (subunit alpha, part of F(1), 3 molecules per monomer), ATP2 (subunit beta, part of F(1), 3 molecules per monomer), ATP3 (subunit gamma, part of the central stalk), ATP4 (subunit b, part of the peripheral stalk), ATP5/OSCP (subunit 5/OSCP, part of the peripheral stalk), ATP6 (subunit a, part of the peripheral stalk), ATP7 (subunit d, part of the peripheral stalk), ATP8 (subunit 8, part of the peripheral stalk), OLI1 (subunit c, part of the rotor, 10 molecules per monomer), ATP14 (subunit h, part of the peripheral stalk), ATP15 (subunit epsilon, part of the central stalk), ATP16 (subunit delta, part of the central stalk), ATP17 (subunit f, part of the peripheral stalk), ATP18 (subunit i/j, part of the peripheral stalk). Dimer-specific subunits are ATP19 (subunit k, at interface between monomers), ATP20 (subunit g, at interface between monomers), TIM11 (subunit e, at interface between monomers). Also contains subunit L.

Its subcellular location is the mitochondrion inner membrane. In terms of biological role, mitochondrial membrane ATP synthase (F(1)F(0) ATP synthase or Complex V) produces ATP from ADP in the presence of a proton gradient across the membrane which is generated by electron transport complexes of the respiratory chain. F-type ATP synthases consist of two structural domains, F(1) - containing the extramembraneous catalytic core, and F(0) - containing the membrane proton channel, linked together by a central stalk and a peripheral stalk. During catalysis, ATP synthesis in the catalytic domain of F(1) is coupled via a rotary mechanism of the central stalk subunits to proton translocation. Part of the complex F(0) domain and the peripheral stalk, which acts as a stator to hold the catalytic alpha/ATP1(3)beta/ATP2(3) subcomplex and subunit a/ATP6 static relative to the rotary elements. This is ATP synthase subunit d, mitochondrial from Pichia angusta (Yeast).